Here is a 201-residue protein sequence, read N- to C-terminus: Outer-membrane lipoprotein LolB (201 aa).

Residues 1-18 (MKWCRLSIILMSLILLAG) form the signal peptide. C19 carries N-palmitoyl cysteine lipidation. The S-diacylglycerol cysteine moiety is linked to residue C19.

This sequence belongs to the LolB family. Monomer.

It is found in the cell outer membrane. Plays a critical role in the incorporation of lipoproteins in the outer membrane after they are released by the LolA protein. The protein is Outer-membrane lipoprotein LolB of Nitrosococcus oceani (strain ATCC 19707 / BCRC 17464 / JCM 30415 / NCIMB 11848 / C-107).